The following is a 166-amino-acid chain: Peptidyl-prolyl cis-trans isomerase cyp18 (166 aa).

One can recognise a PPIase cyclophilin-type domain in the interval 2 to 164 (STVELNTSAG…QPVVIESAKI (163 aa)).

This sequence belongs to the cyclophilin-type PPIase family. Monomer.

It localises to the cytoplasm. It carries out the reaction [protein]-peptidylproline (omega=180) = [protein]-peptidylproline (omega=0). With respect to regulation, inhibition by cyclosporin A with a Ki of 21 mu-mol. In terms of biological role, PPIases accelerate the folding of proteins. It catalyzes the cis-trans isomerization of proline imidic peptide bonds in oligopeptides. The chain is Peptidyl-prolyl cis-trans isomerase cyp18 from Streptomyces antibioticus.